Reading from the N-terminus, the 210-residue chain is uncharacterized protein (210 aa).

Phosphoserine is present on residues S18, S39, S41, S57, and S60. Residues 33 to 46 (LDLDQRSMSPSNIA) show a composition bias toward polar residues. The interval 33-58 (LDLDQRSMSPSNIASGEDRITRTNSG) is disordered. 2 disordered regions span residues 100–139 (YDHN…YKVS) and 177–210 (DSAP…NVHT). Residues 102-116 (HNNGTKSPTPKTSNM) show a composition bias toward polar residues. A compositionally biased stretch (basic and acidic residues) spans 130 to 139 (NDKDDKYKVS). A phosphoserine mark is found at S178, S189, and S192. A compositionally biased stretch (polar residues) spans 191 to 210 (HSPSLNSMDNTTKHSSNVHT).

This is an uncharacterized protein from Saccharomyces cerevisiae (strain ATCC 204508 / S288c) (Baker's yeast).